Here is a 349-residue protein sequence, read N- to C-terminus: Terpene cyclase janA (349 aa).

N80 is a glycosylation site (N-linked (GlcNAc...) asparagine). Helical transmembrane passes span L81–L101, L116–I136, I155–L175, L189–Y209, I223–A243, and V308–L328.

This sequence belongs to the membrane-bound ascI terpene cyclase family.

The protein localises to the membrane. Its pathway is secondary metabolite biosynthesis. In terms of biological role, part of the gene cluster that mediates the biosynthesis of the indole diterpenes janthitremanes such as shearinine K or shearinine A. The geranylgeranyl diphosphate (GGPP) synthase janG catalyzes the first step in janthitremane biosynthesis via conversion of farnesyl pyrophosphate and isopentyl pyrophosphate into geranylgeranyl pyrophosphate (GGPP). Condensation of indole-3-glycerol phosphate with GGPP by the prenyl transferase janC then forms 3-geranylgeranylindole (3-GGI). Epoxidation by the FAD-dependent monooxygenase janM leads to a epoxidized-GGI that is substrate of the terpene cyclase janB for cyclization to yield paspaline. Paspaline is subsequently converted to 13-desoxypaspaline by the cytochrome P450 monooxygenase janP, via beta-PC-M6 in a series of alpha-face oxidations. The cytochrome P450 monooxygenase janQ is proposed to carry out sequential beta-face oxidation steps at C-7 and C-13 of 13-desoxypaspaline to form paspalicine and paspalinine respectively. The indole diterpene prenyltransferase janD may then convert paspalinine into shearinine K which is substrate of janO and/or additional enzymes for oxidation and cyclization to generate shearinine A. The polypeptide is Terpene cyclase janA (Penicillium janthinellum (Penicillium vitale)).